The primary structure comprises 480 residues: 3-isopropylmalate dehydratase large subunit (480 aa).

The [4Fe-4S] cluster site is built by C361, C421, and C424.

The protein belongs to the aconitase/IPM isomerase family. LeuC type 1 subfamily. As to quaternary structure, heterodimer of LeuC and LeuD. It depends on [4Fe-4S] cluster as a cofactor.

It catalyses the reaction (2R,3S)-3-isopropylmalate = (2S)-2-isopropylmalate. The protein operates within amino-acid biosynthesis; L-leucine biosynthesis; L-leucine from 3-methyl-2-oxobutanoate: step 2/4. Catalyzes the isomerization between 2-isopropylmalate and 3-isopropylmalate, via the formation of 2-isopropylmaleate. The sequence is that of 3-isopropylmalate dehydratase large subunit from Corynebacterium diphtheriae (strain ATCC 700971 / NCTC 13129 / Biotype gravis).